We begin with the raw amino-acid sequence, 823 residues long: MNPTAQRIHELTDLLNRYAYEYYTLDAPSIPDAEYDRLFRELEALERNHPELKLPDSPTQRVGGEPLAGFAEVRHEVPMLSLTNAFSPQDENGVFDHAEMYAFDQRVRDGLDGGNPEYVIEPKFDGLAISLLYRDGVLVQAATRGDGTTGEDVTRNVKTVSNIPLRLHGENVPELIEVRGEVLMLKADFAGLNKRQAENGQKPFANPRNAAAGSLRQLDSRITAQRKLHFFPYSIARQQGGFEAEEHIQELAYFQELGFSLPNGNFGCFKNIGEVLAFYEHMQQKRPELPYEIDGMVVKVNSLAQQRELGFISRAPRWAVAHKFPAEEALTIVEAIDVQIGRTGAVTPVARLQPVFVGGVTVTNATLHNQDEVSRKDVRVGDTVVVRRAGDVIPEVVRVIFERRPMQETAVAVSDGIGHQQDDLFAETPSAKQTESVPLHKPYRLPARCPICRSEIEREEGEAVARCSGGMLCQAQRAQGLIHFASRKAMDIDGLGEKQIEQLVAQDLVRHFADLYRIDIPTLQKMKETADKGSSENENGDAETVSGDLSKYNTQNGKKQPTKWAQNILAGIESGKTPELARFLFALGIRHVGERTAKTLAQAFGTLERVRRAPEPVLACLPDIGTVVARSIAHFFAQAEQQAMIDELLAAGVAPQAQAVSLPAAQYAGPQRWITRLPGFKISENKAQALWELAGQSIEGLQNDKALPADWQAWRSKAQNTALLENLKTFFAQMPSEDEAAQGSDGINKAVAGKTFVLTGTLPTFKRDQAQALIEAAGGKVSGSVSKKTDYVVAGEAAGSKLEKANALGVSVLSEAELLTLLC.

Residues 32–36 (DAEYD), 81–82 (SL), and E121 each bind NAD(+). The active-site N6-AMP-lysine intermediate is the K123. The NAD(+) site is built by R144, E181, K299, and K323. Zn(2+)-binding residues include C449, C452, C467, and C473. The disordered stretch occupies residues 528 to 558 (ETADKGSSENENGDAETVSGDLSKYNTQNGK). The BRCT domain occupies 746 to 823 (GINKAVAGKT…SEAELLTLLC (78 aa)).

The protein belongs to the NAD-dependent DNA ligase family. LigA subfamily. Mg(2+) serves as cofactor. Requires Mn(2+) as cofactor.

The catalysed reaction is NAD(+) + (deoxyribonucleotide)n-3'-hydroxyl + 5'-phospho-(deoxyribonucleotide)m = (deoxyribonucleotide)n+m + AMP + beta-nicotinamide D-nucleotide.. Its function is as follows. DNA ligase that catalyzes the formation of phosphodiester linkages between 5'-phosphoryl and 3'-hydroxyl groups in double-stranded DNA using NAD as a coenzyme and as the energy source for the reaction. It is essential for DNA replication and repair of damaged DNA. The protein is DNA ligase of Neisseria gonorrhoeae (strain NCCP11945).